The primary structure comprises 203 residues: Phosphatidylglycerophosphatase B (203 aa).

Residue Met-1 is a topological domain, cytoplasmic. The chain crosses the membrane as a helical span at residues 2 to 17; the sequence is YKPVSLFLFFLILAAA. At 18–55 the chain is on the extracellular side; the sequence is IHTNAVQSADEAISKAAVLIRQPWLNEVMTGITHLGAS. A helical transmembrane segment spans residues 56 to 74; the sequence is SFLLPLIVIIGAGMFFYRK. Over 75–78 the chain is Cytoplasmic; sequence TWDG. The chain crosses the membrane as a helical span at residues 79–99; sequence LLMLLVFGTDRLLNKVLKEWI. The segment at 96–104 is phosphatase sequence motif I; sequence KEWIERVRP. The Extracellular portion of the chain corresponds to 100 to 119; that stretch reads ERVRPDFAPLVHESSFSFPS. A phosphatase sequence motif II region spans residues 118-121; that stretch reads PSGH. A helical transmembrane segment spans residues 120 to 139; sequence GHSMNAACVYPVIAYFLVKH. The Proton donors role is filled by His-121. The Cytoplasmic portion of the chain corresponds to 140–146; sequence LPFLSKH. The chain crosses the membrane as a helical span at residues 147–167; sequence KKMVYIIAGVIAVLVGISRVY. Positions 164 to 175 are phosphatase sequence motif III; sequence SRVYLGVHFVTD. At 168-172 the chain is on the extracellular side; sequence LGVHF. His-171 acts as the Nucleophile in catalysis. The helical transmembrane segment at 173–196 threads the bilayer; that stretch reads VTDVLGGFSLGLLLFFLVKGFDEK. At 197 to 203 the chain is on the cytoplasmic side; the sequence is IKRFRQK.

The protein belongs to the PA-phosphatase related phosphoesterase family.

It is found in the cell membrane. It catalyses the reaction a 1,2-diacyl-sn-glycero-3-phospho-(1'-sn-glycero-3'-phosphate) + H2O = a 1,2-diacyl-sn-glycero-3-phospho-(1'-sn-glycerol) + phosphate. Catalyzes the dephosphorylation of phosphatidylglycerophosphate (PGP) to phosphatidylglycerol. Also has undecaprenyl pyrophosphate phosphatase activity, required for the biosynthesis of the lipid carrier undecaprenyl phosphate. The polypeptide is Phosphatidylglycerophosphatase B (Bacillus subtilis (strain 168)).